The primary structure comprises 309 residues: Tagatose-6-phosphate kinase (309 aa).

Belongs to the carbohydrate kinase PfkB family. LacC subfamily.

It catalyses the reaction D-tagatofuranose 6-phosphate + ATP = D-tagatofuranose 1,6-bisphosphate + ADP + H(+). It participates in carbohydrate metabolism; D-tagatose 6-phosphate degradation; D-glyceraldehyde 3-phosphate and glycerone phosphate from D-tagatose 6-phosphate: step 1/2. The sequence is that of Tagatose-6-phosphate kinase from Streptococcus pyogenes serotype M1.